A 217-amino-acid polypeptide reads, in one-letter code: Nucleoside diphosphate-linked moiety X motif 6 (217 aa).

One can recognise a Nudix hydrolase domain in the interval 42-177 (THQVGVAGAV…VAKLLLYGYN (136 aa)). The Nudix box signature appears at 77-98 (GLSDQGEDIGATAVREVLEETG).

The protein belongs to the Nudix hydrolase family. Detected in liver (at protein level).

It localises to the cytoplasm. The protein resides in the nucleus. It is found in the mitochondrion. In terms of biological role, may contribute to the regulation of cell proliferation. The polypeptide is Nucleoside diphosphate-linked moiety X motif 6 (nudt6) (Xenopus laevis (African clawed frog)).